A 306-amino-acid polypeptide reads, in one-letter code: D-alanine--D-alanine ligase (306 aa).

Residues 101 to 303 (KLVWQALGLP…FSQLVARILM (203 aa)) form the ATP-grasp domain. 134 to 189 (VAKLGLPLIVKPSHEGSSVGMSKVDHASELQKALVEAFQHDSDVLIEKWLSGPEFT) contacts ATP. Residues Asp257, Glu270, and Asn272 each coordinate Mg(2+).

The protein belongs to the D-alanine--D-alanine ligase family. Requires Mg(2+) as cofactor. It depends on Mn(2+) as a cofactor.

The protein localises to the cytoplasm. It catalyses the reaction 2 D-alanine + ATP = D-alanyl-D-alanine + ADP + phosphate + H(+). It participates in cell wall biogenesis; peptidoglycan biosynthesis. In terms of biological role, cell wall formation. The polypeptide is D-alanine--D-alanine ligase (Yersinia pseudotuberculosis serotype O:1b (strain IP 31758)).